The primary structure comprises 268 residues: 2,5-diamino-6-ribosylamino-4(3H)-pyrimidinone 5'-phosphate reductase (268 aa).

Residues Thr68, Asp72, 103–106, and 191–195 contribute to the NADP(+) site; these read SNLR and GAELL.

Belongs to the HTP reductase family. Homodimer.

The enzyme catalyses 2,5-diamino-6-(1-D-ribitylamino)pyrimidin-4(3H)-one 5'-phosphate + NADP(+) = 2,5-diamino-6-(1-D-ribosylamino)pyrimidin-4(3H)-one 5'-phosphate + NADPH + H(+). The catalysed reaction is 2,5-diamino-6-(1-D-ribitylamino)pyrimidin-4(3H)-one 5'-phosphate + NAD(+) = 2,5-diamino-6-(1-D-ribosylamino)pyrimidin-4(3H)-one 5'-phosphate + NADH + H(+). It participates in cofactor biosynthesis; riboflavin biosynthesis. Functionally, catalyzes an early step in riboflavin biosynthesis, the NADPH-dependent reduction of the ribose side chain of 2,5-diamino-6-ribosylamino-4(3H)-pyrimidinone 5'-phosphate, yielding 2,5-diamino-6-ribitylamino-4(3H)-pyrimidinone 5'-phosphate. The chain is 2,5-diamino-6-ribosylamino-4(3H)-pyrimidinone 5'-phosphate reductase from Schizosaccharomyces pombe (strain 972 / ATCC 24843) (Fission yeast).